Reading from the N-terminus, the 335-residue chain is Nucleoid-associated protein PP_0973 (335 aa).

Belongs to the YejK family.

It localises to the cytoplasm. The protein resides in the nucleoid. In Pseudomonas putida (strain ATCC 47054 / DSM 6125 / CFBP 8728 / NCIMB 11950 / KT2440), this protein is Nucleoid-associated protein PP_0973.